A 592-amino-acid polypeptide reads, in one-letter code: PiggyBac transposable element-derived protein 2 (592 aa).

The interval 31 to 69 (EEEESNNNREEIFIAPPDNAAGEFTDEDSGDEDSQRGAH) is disordered.

The polypeptide is PiggyBac transposable element-derived protein 2 (PGBD2) (Homo sapiens (Human)).